The sequence spans 677 residues: Gamma-tubulin complex subunit mod21 (677 aa).

Component of the gamma-tubulin complex composed of at least alp4, alp6, alp16, ghf1, gtb1 and mod21.

The protein resides in the cytoplasm. It localises to the cytoskeleton. Its subcellular location is the microtubule organizing center. It is found in the spindle pole body. Functionally, component of the gamma-tubulin complex that is required for the regulation of both interphase microtubule organization and nucleation, and mitotic bipolar spindles. Required for correct septation. This chain is Gamma-tubulin complex subunit mod21, found in Schizosaccharomyces pombe (strain 972 / ATCC 24843) (Fission yeast).